The sequence spans 317 residues: WD repeat-containing protein 82 (317 aa).

6 WD repeats span residues 21-60 (ENTD…QSRT), 107-146 (GHTK…CQGL), 148-186 (HLSG…KGPF), 194-233 (EKEC…PLQT), 238-278 (PNNK…KVSV), and 282-317 (DHPG…EEGL).

This sequence belongs to the WD repeat SWD2 family. Component of the SET1 complex, composed at least of the catalytic subunit Set1, wds/WDR5, Wdr82, Rbbp5, ash2, Cfp1/CXXC1, hcf and Dpy-30L1. Interacts with male-specific lethal (MSL) histone acetyltransferase complex at least composed of mof, msl-1, msl-2 and msl-3. Interacts with su(sable).

The protein localises to the nucleus. In terms of biological role, component of the SET1 complex that specifically di- and trimethylates 'Lys-4' of histone H3. Together with su(sable), part of a transcription termination checkpoint that promotes transcription termination of aberrant RNAs and their subsequent degradation by the nuclear exosome. The chain is WD repeat-containing protein 82 from Drosophila melanogaster (Fruit fly).